The chain runs to 127 residues: Large ribosomal subunit protein bL17 (127 aa).

Belongs to the bacterial ribosomal protein bL17 family. In terms of assembly, part of the 50S ribosomal subunit. Contacts protein L32.

The protein is Large ribosomal subunit protein bL17 of Xanthomonas euvesicatoria pv. vesicatoria (strain 85-10) (Xanthomonas campestris pv. vesicatoria).